We begin with the raw amino-acid sequence, 998 residues long: 2-imino-3-(indol-3-yl)propanoate dimerase (998 aa).

The enzyme catalyses 2 H2O2 = O2 + 2 H2O. It carries out the reaction 2 2-iminio-3-(indol-3-yl)propanoate + H2O2 = indole-3-pyruvate imine dimer + 2 H2O. It participates in pigment biosynthesis; violacein biosynthesis. Catalyzes the hydrogen peroxide-dependent dimerization of two L-tryptophan-derived molecules (imine form of indole 3-pyruvate (IPA)), to form an uncharacterized product suggested to be indole-3-pyruvate imine dimer that can spontaneously convert into dichlorochromopyrrolate (CPA). The uncharacterized product is the substrate of VioE. The polypeptide is 2-imino-3-(indol-3-yl)propanoate dimerase (vioB) (Chromobacterium violaceum (strain ATCC 12472 / DSM 30191 / JCM 1249 / CCUG 213 / NBRC 12614 / NCIMB 9131 / NCTC 9757 / MK)).